Consider the following 321-residue polypeptide: Mas-related G-protein coupled receptor member H (321 aa).

Residues 1-35 (MEPLATTLCPQECTQTTRNETPNETTWSSEHVTKY) are Extracellular-facing. The N-linked (GlcNAc...) asparagine glycan is linked to asparagine 23. The chain crosses the membrane as a helical span at residues 36-56 (TYISISLVICSLGLVGNGLLI). At 57-71 (WFLIFCIKRKPFTIY) the chain is on the cytoplasmic side. Residues 72-92 (ILHLAFADFMVLLCSSIIQLV) traverse the membrane as a helical segment. Topologically, residues 93-102 (NTFHIYDSTL) are extracellular. Residues 103-126 (VSYAVLFMIFGYNTGLHLLTAISV) form a helical membrane-spanning segment. Residues 127–147 (ERCLSVLYPIWYHCRRPKHQS) lie on the Cytoplasmic side of the membrane. Residues 148-168 (TVACTLLWALSVLVSGLENFF) form a helical membrane-spanning segment. Over 169–188 (CILEVKPQFPECRYVYIFSC) the chain is Extracellular. Residues 189–209 (TLTFLVFVPLMVFSNLILFIQ) form a helical membrane-spanning segment. At 210-225 (VCCNLKPRQPAKLYVI) the chain is on the cytoplasmic side. The helical transmembrane segment at 226-246 (IMATVILFLVFAMPMKVLLII) threads the bilayer. A topological domain (extracellular) is located at residue glycine 247. Residues 248-271 (YYSNSTDASVWKSLPYLNMLSTIN) form a helical membrane-spanning segment. At 272–320 (CSINPIVYFVVGSLRRKRSRKSLKEALQKVFEEKPVVASRENEVQFSLP) the chain is on the cytoplasmic side.

It belongs to the G-protein coupled receptor 1 family. Mas subfamily.

It is found in the cell membrane. Orphan receptor. May regulate nociceptor function and/or development, including the sensation or modulation of pain. The chain is Mas-related G-protein coupled receptor member H (Mrgprh) from Rattus norvegicus (Rat).